We begin with the raw amino-acid sequence, 1029 residues long: Huntingtin-interacting protein 1 (1029 aa).

The region spanning 32 to 160 (ERESFERTQT…EYHTKNPRFP (129 aa)) is the ENTH domain. Ser338 carries the phosphoserine modification. The stretch at 375 to 636 (HLIERLYREI…IQEALSQLEE (262 aa)) forms a coiled coil. The tract at residues 410-491 (SELEAELAEQ…HADLLRKNAE (82 aa)) is pDED. Residues 763-1004 (GLDIKQEELG…ELRKKHYELA (242 aa)) enclose the I/LWEQ domain. An important for actin binding region spans residues 859-916 (RWTEGLISASKAVGWGATIMVDAADLVVQGKGKFEELMVCSREIAASTAQLVAASKVK). A disordered region spans residues 1009 to 1029 (GWEEGTEASPSTVQEAIPDKE).

This sequence belongs to the SLA2 family. Homodimer. Binds actin. Binds HTT (via N-terminus). This interaction is restricted to the brain. Binds to IFT57. In normal conditions, it poorly interacts with IFT57, HIP1 being strongly associated with HTT. However, in mutant HTT proteins with a long poly-Gln region, interaction between HTT and HIP1 is inhibited, promoting the interaction between HIP1 and IFT57. Interacts with CLTB (via N-terminus). Interacts (via coiled coil domain) with AR. Interacts with AP2A1, AP2A2, CLTC and HIP1R. Interacts with GRIA1, GRIN2A and GRIN2B. As to expression, most abundantly expressed in brain. In brain, expressed in cortical tissue, hippocampus, the molecular layer of the cerebellum and olfactory bulb. Also expressed in spinal cord and bone marrow (at protein level). Expressed in reproductive tissues.

The protein localises to the cytoplasm. Its subcellular location is the nucleus. It is found in the endomembrane system. It localises to the cytoplasmic vesicle. The protein resides in the clathrin-coated vesicle membrane. Its function is as follows. Plays a role in clathrin-mediated endocytosis and trafficking. Involved in regulating AMPA receptor trafficking in the central nervous system in an NMDA-dependent manner. Regulates presynaptic nerve terminal activity. Enhances androgen receptor (AR)-mediated transcription. May act as a proapoptotic protein that induces cell death by acting through the intrinsic apoptosis pathway. Binds 3-phosphoinositides (via ENTH domain). May act through the ENTH domain to promote cell survival by stabilizing receptor tyrosine kinases following ligand-induced endocytosis. May play a functional role in the cell filament networks. May be required for differentiation, proliferation, and/or survival of somatic and germline progenitors. This Mus musculus (Mouse) protein is Huntingtin-interacting protein 1.